Consider the following 223-residue polypeptide: ATP-dependent Clp protease proteolytic subunit 2 (223 aa).

The active-site Nucleophile is the serine 118. Histidine 143 is an active-site residue.

The protein belongs to the peptidase S14 family. In terms of assembly, fourteen ClpP subunits assemble into 2 heptameric rings which stack back to back to give a disk-like structure with a central cavity, resembling the structure of eukaryotic proteasomes.

It is found in the cytoplasm. The enzyme catalyses Hydrolysis of proteins to small peptides in the presence of ATP and magnesium. alpha-casein is the usual test substrate. In the absence of ATP, only oligopeptides shorter than five residues are hydrolyzed (such as succinyl-Leu-Tyr-|-NHMec, and Leu-Tyr-Leu-|-Tyr-Trp, in which cleavage of the -Tyr-|-Leu- and -Tyr-|-Trp bonds also occurs).. Cleaves peptides in various proteins in a process that requires ATP hydrolysis. Has a chymotrypsin-like activity. Plays a major role in the degradation of misfolded proteins. This is ATP-dependent Clp protease proteolytic subunit 2 from Leifsonia xyli subsp. xyli (strain CTCB07).